We begin with the raw amino-acid sequence, 127 residues long: Adult-specific rigid cuticular protein 12.6 (127 aa).

The 79-residue stretch at 9–87 (GPAYNFGYNT…ALAALAPKAP (79 aa)) folds into the Chitin-binding type R&amp;R domain.

Functionally, component of the rigid cuticle of the spider. The chain is Adult-specific rigid cuticular protein 12.6 from Araneus diadematus (European garden spider).